The following is a 253-amino-acid chain: rRNA adenine N-6-methyltransferase (253 aa).

S-adenosyl-L-methionine is bound by residues Asn14, Leu16, Gly40, Glu61, Asp85, and Asn101. The disordered stretch occupies residues 229–253; that stretch reads CAREESTPRPYLPDCTPTTGSISSR. A compositionally biased stretch (polar residues) spans 244 to 253; sequence TPTTGSISSR.

Belongs to the class I-like SAM-binding methyltransferase superfamily. rRNA adenine N(6)-methyltransferase family.

Involved in erythromycin resistance. This Corynebacterium diphtheriae protein is rRNA adenine N-6-methyltransferase (ermA).